The primary structure comprises 293 residues: 5'-3' exoribonuclease Rnm (293 aa).

Residues histidine 13, histidine 15, aspartate 20, histidine 45, glutamate 72, histidine 83, histidine 198, aspartate 255, and histidine 257 each coordinate Mn(2+).

It belongs to the PHP family. TrpH/YciV subfamily. Requires Mn(2+) as cofactor.

The enzyme catalyses a ribonucleoside 3',5'-bisphosphate + H2O = a ribonucleoside 5'-phosphate + phosphate. Functionally, exoribonuclease that catalyzes the last steps of 5S, 16S and 23S rRNA 5'-end maturation. Removes 3 nucleotides (nt) from the 5' end of 5S, 16S and 23S rRNA precursors to generate the mature 5' ends. Precursors with longer extensions are not processed (7 nt at the 5' end of pre-23S rRNA or 66 nt at the 5'-end of 16S rRNA are not processed). 5S and 23S rRNA maturation occurs more efficiently and accurately on ribosomal particles as compared to free RNA; the enzyme overdigests free RNA but generates the correct 5'-end in ribosomes from rnm deletion strains. Efficiently catalyzes the hydrolysis of the 3'-phosphate from 3',5'-bis-phosphonucleotides as well as the successive hydrolysis of 5'-phosphomononucleotides from the 5'-end of short pieces of RNA and DNA, with no specificity toward the identity of the nucleotide base. Is more efficient at hydrolyzing RNA oligonucleotides than DNA oligonucleotides. This enzyme can also hydrolyze annealed DNA duplexes, albeit at a catalytic efficiency approximately 10-fold lower than that of the corresponding single-stranded oligonucleotides. This chain is 5'-3' exoribonuclease Rnm, found in Escherichia coli (strain K12).